A 224-amino-acid chain; its full sequence is ATP synthase subunit a (224 aa).

The next 6 membrane-spanning stretches (helical) occupy residues 17 to 37 (LSLN…IYWL), 72 to 92 (IFIS…FPYI), 99 to 119 (LTLT…YGWI), 125 to 145 (MFAH…MVCI), 170 to 190 (LLLT…VTFL), and 195 to 215 (IALL…FAVL).

This sequence belongs to the ATPase A chain family. F-type ATPases have 2 components, CF(1) - the catalytic core - and CF(0) - the membrane proton channel. CF(1) has five subunits: alpha(3), beta(3), gamma(1), delta(1), epsilon(1). CF(0) has three main subunits: a, b and c.

Its subcellular location is the mitochondrion inner membrane. Mitochondrial membrane ATP synthase (F(1)F(0) ATP synthase or Complex V) produces ATP from ADP in the presence of a proton gradient across the membrane which is generated by electron transport complexes of the respiratory chain. F-type ATPases consist of two structural domains, F(1) - containing the extramembraneous catalytic core and F(0) - containing the membrane proton channel, linked together by a central stalk and a peripheral stalk. During catalysis, ATP synthesis in the catalytic domain of F(1) is coupled via a rotary mechanism of the central stalk subunits to proton translocation. Key component of the proton channel; it may play a direct role in the translocation of protons across the membrane. This chain is ATP synthase subunit a (mt:ATPase6), found in Drosophila simulans (Fruit fly).